The sequence spans 175 residues: Calcineurin subunit B (175 aa).

EF-hand domains lie at 21–56, 60–88, 90–125, and 131–166; these read DEIE…SANP, RIME…FSGR, SKDE…MVGS, and QLQQ…TEVA. Ca(2+) contacts are provided by aspartate 34, aspartate 36, serine 38, serine 40, glutamate 45, aspartate 66, aspartate 68, serine 70, aspartate 72, glutamate 77, aspartate 103, aspartate 105, aspartate 107, glutamate 114, aspartate 144, aspartate 146, aspartate 148, glutamine 150, and glutamate 155.

The protein belongs to the calcineurin regulatory subunit family. As to quaternary structure, composed of a catalytic subunit (A) and a regulatory subunit (B).

In terms of biological role, regulatory subunit of calcineurin, a calcium-dependent, calmodulin stimulated protein phosphatase. Confers calcium sensitivity. The sequence is that of Calcineurin subunit B (CNB1) from Candida glabrata (strain ATCC 2001 / BCRC 20586 / JCM 3761 / NBRC 0622 / NRRL Y-65 / CBS 138) (Yeast).